The chain runs to 112 residues: MVTMDRTEILEKIKQAEIKVEEAIRAAEEERKNKILEAKMKAREIIESAEAEAVKVKEDILNSARQQIEAEKEEIRKRETKNIEDYAKKGKDNIMKAVEMLYNEFVGMMEHA.

This is an uncharacterized protein from Archaeoglobus fulgidus (strain ATCC 49558 / DSM 4304 / JCM 9628 / NBRC 100126 / VC-16).